The following is a 159-amino-acid chain: uncharacterized protein (159 aa).

This is an uncharacterized protein from Caenorhabditis elegans.